Reading from the N-terminus, the 304-residue chain is N-acetylmuramic acid 6-phosphate etherase (304 aa).

One can recognise an SIS domain in the interval 60–221 (GVSVLRHGGR…STAVMVRLGY (162 aa)). Glu88 functions as the Proton donor in the catalytic mechanism. Glu119 is an active-site residue.

This sequence belongs to the GCKR-like family. MurNAc-6-P etherase subfamily. As to quaternary structure, homodimer.

It carries out the reaction N-acetyl-D-muramate 6-phosphate + H2O = N-acetyl-D-glucosamine 6-phosphate + (R)-lactate. It functions in the pathway amino-sugar metabolism; N-acetylmuramate degradation. Specifically catalyzes the cleavage of the D-lactyl ether substituent of MurNAc 6-phosphate, producing GlcNAc 6-phosphate and D-lactate. The polypeptide is N-acetylmuramic acid 6-phosphate etherase (Thermobifida fusca (strain YX)).